A 200-amino-acid chain; its full sequence is Cation channel sperm-associated auxiliary subunit zeta (200 aa).

Residues 1–29 (MEEKPSKVSLKSSDRQGSDEESVHSDTRD) are compositionally biased toward basic and acidic residues. Disordered stretches follow at residues 1–31 (MEEK…RDLW) and 58–78 (NISK…EGYK).

Component of the CatSper complex or CatSpermasome composed of the core pore-forming members CATSPER1, CATSPER2, CATSPER3 and CATSPER4 as well as auxiliary members CATSPERB, CATSPERG, CATSPERD, CATSPERE, CATSPERZ, C2CD6/CATSPERT, TMEM249, TMEM262 and EFCAB9. HSPA1 may be an additional auxiliary complex member. The core complex members CATSPER1, CATSPER2, CATSPER3 and CATSPER4 form a heterotetrameric channel. The auxiliary CATSPERB, CATSPERG, CATSPERD and CATSPERE subunits form a pavilion-like structure over the pore which stabilizes the complex through interactions with CATSPER4, CATSPER3, CATSPER1 and CATSPER2 respectively. TMEM262/CATSPERH interacts with CATSPERB, further stabilizing the complex. C2CD6/CATSPERT interacts at least with CATSPERD and is required for targeting the CatSper complex in the flagellar membrane. Interacts with EFCAB9; the interaction is direct, Ca(2+)-dependent and connects EFCAB9 with the CatSper complex. Dissociates from EFCAB9 at elevated pH.

The protein resides in the cell projection. It localises to the cilium. It is found in the flagellum membrane. Auxiliary component of the CatSper complex, a complex involved in sperm cell hyperactivation. Sperm cell hyperactivation is needed for sperm motility which is essential late in the preparation of sperm for fertilization. Required for a distribution of the CatSper complex in linear quadrilateral nanodomains along the flagellum, maximizing fertilization inside the mammalian female reproductive tract. Together with EFCAB9, associates with the CatSper channel pore and is required for the two-row structure of each single CatSper channel. The polypeptide is Cation channel sperm-associated auxiliary subunit zeta (Homo sapiens (Human)).